A 233-amino-acid polypeptide reads, in one-letter code: MVQQIWETLKETITAYTGLSPAAFFTVLALAFAVYQVVSGFFVSPEVHRPRSLEVQPQSEPLPPPVQLGEITEEELKLYDGSDSKKPLLMAIKGQIYDVSQSRMFYGPGGPYALFAGKDASRALAKMSFEDQDLTGDISGLGAFELEALQDWEYKFMSKYVKVGTIQKKDGEGKESSEPSEAKTASAEGLSTNTGEEASAITHDETSRSTGEKIAETTEKKDVATDDDDAAKE.

Residues 23 to 43 (AFFTVLALAFAVYQVVSGFFV) traverse the membrane as a helical segment. The Cytochrome b5 heme-binding domain occupies 70 to 167 (EITEEELKLY…SKYVKVGTIQ (98 aa)). Residues 70 to 167 (EITEEELKLY…SKYVKVGTIQ (98 aa)) form a steroid-binding region. Composition is skewed to basic and acidic residues over residues 169 to 181 (KDGEGKESSEPSE) and 202 to 224 (THDETSRSTGEKIAETTEKKDVA). Residues 169–233 (KDGEGKESSE…ATDDDDAAKE (65 aa)) form a disordered region. Thr-225 carries the phosphothreonine modification.

It belongs to the cytochrome b5 family. MAPR subfamily.

The protein localises to the cell membrane. This is Membrane steroid-binding protein 2 (MSBP2) from Arabidopsis thaliana (Mouse-ear cress).